The sequence spans 380 residues: Protein Wnt-5a (380 aa).

The signal sequence occupies residues 1-40 (MRKNLWTFQFGGEASGLVGSAMVSQHFVVLLMSLYCLTQS). Cys104 and Cys115 are joined by a disulfide. N-linked (GlcNAc...) asparagine glycans are attached at residues Asn114 and Asn120. 10 disulfide bridges follow: Cys154/Cys162, Cys164/Cys182, Cys238/Cys252, Cys240/Cys247, Cys309/Cys340, Cys325/Cys335, Cys339/Cys379, Cys355/Cys370, Cys357/Cys367, and Cys362/Cys363. A lipid anchor (O-palmitoleoyl serine; by PORCN) is attached at Ser244. Residues Asn312 and Asn326 are each glycosylated (N-linked (GlcNAc...) asparagine).

It belongs to the Wnt family. In terms of processing, palmitoleoylation is required for efficient binding to frizzled receptors. Depalmitoleoylation leads to Wnt signaling pathway inhibition. In terms of tissue distribution, found primarily in ectoderm with lower levels of expression in mesoderm. Detected in the head and tail with lower expression in the middle of the embryo. No expression was found in the notochord.

It localises to the secreted. The protein resides in the extracellular space. Its subcellular location is the extracellular matrix. Ligand for members of the frizzled family of seven transmembrane receptors. Can activate or inhibit canonical Wnt signaling, depending on receptor context. Plays a role in normal embryonic development. This Xenopus laevis (African clawed frog) protein is Protein Wnt-5a (wnt5a).